A 269-amino-acid chain; its full sequence is Microtubule-associated protein RP/EB family member 1 (269 aa).

In terms of domain architecture, Calponin-homology (CH) spans 14–116 (NLSRHDMLAW…FVQWFKKFFD (103 aa)). Residues 168 to 190 (RTAVSNKPPAQGISKKPATVGNG) are disordered. The region spanning 186-256 (TVGNGDDESA…LYATDEGFVI (71 aa)) is the EB1 C-terminal domain.

It belongs to the MAPRE family.

Its subcellular location is the cytoplasm. It localises to the cytoskeleton. The protein localises to the microtubule organizing center. The protein resides in the centrosome. It is found in the golgi apparatus. Its subcellular location is the spindle. It localises to the spindle pole. In terms of biological role, plus-end tracking protein (+TIP) that binds to the plus-end of microtubules and regulates the dynamics of the microtubule cytoskeleton. Promotes cytoplasmic microtubule nucleation and elongation. Involved in mitotic spindle positioning by stabilizing microtubules and promoting dynamic connection between astral microtubules and the cortex during mitotic chromosome segregation. The polypeptide is Microtubule-associated protein RP/EB family member 1 (mapre1) (Xenopus tropicalis (Western clawed frog)).